The following is a 119-amino-acid chain: Large ribosomal subunit protein bL20c (119 aa).

This sequence belongs to the bacterial ribosomal protein bL20 family.

It localises to the plastid. It is found in the chloroplast. Its function is as follows. Binds directly to 23S ribosomal RNA and is necessary for the in vitro assembly process of the 50S ribosomal subunit. It is not involved in the protein synthesizing functions of that subunit. The sequence is that of Large ribosomal subunit protein bL20c from Amborella trichopoda.